Here is a 625-residue protein sequence, read N- to C-terminus: tRNA uridine 5-carboxymethylaminomethyl modification enzyme MnmG (625 aa).

Residues 11–16 (GAGHAG), V123, and S178 contribute to the FAD site. NAD(+) is bound at residue 271–285 (GPRYCPSIETKIVTF). Position 368 (Q368) interacts with FAD.

It belongs to the MnmG family. In terms of assembly, homodimer. Heterotetramer of two MnmE and two MnmG subunits. It depends on FAD as a cofactor.

It localises to the cytoplasm. Its function is as follows. NAD-binding protein involved in the addition of a carboxymethylaminomethyl (cmnm) group at the wobble position (U34) of certain tRNAs, forming tRNA-cmnm(5)s(2)U34. In Bacteroides fragilis (strain ATCC 25285 / DSM 2151 / CCUG 4856 / JCM 11019 / LMG 10263 / NCTC 9343 / Onslow / VPI 2553 / EN-2), this protein is tRNA uridine 5-carboxymethylaminomethyl modification enzyme MnmG.